The sequence spans 218 residues: Histone chaperone ASF1B (218 aa).

Belongs to the ASF1 family. As to quaternary structure, interacts with histone H3 and histone H4. Interacts strongly with the N-terminus of TOUSLED. In terms of processing, phosphorylated in vitro by TOUSLED.

Its subcellular location is the nucleus. Functionally, histone chaperone that facilitates histone deposition and histone exchange and removal during nucleosome assembly and disassembly. This is Histone chaperone ASF1B (ASF1B) from Arabidopsis thaliana (Mouse-ear cress).